Reading from the N-terminus, the 264-residue chain is Glutamate racemase (264 aa).

Substrate contacts are provided by residues 10 to 11 (DS) and 42 to 43 (YG). The active-site Proton donor/acceptor is the Cys73. 74 to 75 (NT) serves as a coordination point for substrate. The active-site Proton donor/acceptor is Cys183. Substrate is bound at residue 184 to 185 (TH).

This sequence belongs to the aspartate/glutamate racemases family.

The enzyme catalyses L-glutamate = D-glutamate. It functions in the pathway cell wall biogenesis; peptidoglycan biosynthesis. Its function is as follows. Provides the (R)-glutamate required for cell wall biosynthesis. The sequence is that of Glutamate racemase from Streptococcus pyogenes serotype M49 (strain NZ131).